The primary structure comprises 608 residues: UvrABC system protein C (608 aa).

The region spanning 16 to 94 (NRPGVYRMFD…IKEWRPPYNI (79 aa)) is the GIY-YIG domain. Positions 204–239 (NALADELNVGMEQAAMRLDFEKAAELRDQVAILRRV) constitute a UVR domain.

The protein belongs to the UvrC family. As to quaternary structure, interacts with UvrB in an incision complex.

It is found in the cytoplasm. The UvrABC repair system catalyzes the recognition and processing of DNA lesions. UvrC both incises the 5' and 3' sides of the lesion. The N-terminal half is responsible for the 3' incision and the C-terminal half is responsible for the 5' incision. This is UvrABC system protein C from Pseudomonas aeruginosa (strain ATCC 15692 / DSM 22644 / CIP 104116 / JCM 14847 / LMG 12228 / 1C / PRS 101 / PAO1).